The sequence spans 105 residues: UPF0145 protein CCNA_02462 (105 aa).

The protein belongs to the UPF0145 family.

The protein is UPF0145 protein CCNA_02462 of Caulobacter vibrioides (strain NA1000 / CB15N) (Caulobacter crescentus).